Consider the following 414-residue polypeptide: Serine hydroxymethyltransferase (414 aa).

(6S)-5,6,7,8-tetrahydrofolate-binding positions include L121 and 125-127 (GHL). K229 carries the N6-(pyridoxal phosphate)lysine modification.

Belongs to the SHMT family. In terms of assembly, homodimer. It depends on pyridoxal 5'-phosphate as a cofactor.

Its subcellular location is the cytoplasm. It catalyses the reaction (6R)-5,10-methylene-5,6,7,8-tetrahydrofolate + glycine + H2O = (6S)-5,6,7,8-tetrahydrofolate + L-serine. Its pathway is one-carbon metabolism; tetrahydrofolate interconversion. It functions in the pathway amino-acid biosynthesis; glycine biosynthesis; glycine from L-serine: step 1/1. Its function is as follows. Catalyzes the reversible interconversion of serine and glycine with tetrahydrofolate (THF) serving as the one-carbon carrier. This reaction serves as the major source of one-carbon groups required for the biosynthesis of purines, thymidylate, methionine, and other important biomolecules. Also exhibits THF-independent aldolase activity toward beta-hydroxyamino acids, producing glycine and aldehydes, via a retro-aldol mechanism. This chain is Serine hydroxymethyltransferase, found in Polynucleobacter asymbioticus (strain DSM 18221 / CIP 109841 / QLW-P1DMWA-1) (Polynucleobacter necessarius subsp. asymbioticus).